A 203-amino-acid polypeptide reads, in one-letter code: Inosine triphosphate pyrophosphatase (203 aa).

Position 13-18 (13-18 (TGNAKK)) interacts with ITP. Glu43 is a binding site for Mg(2+). ITP is bound by residues Lys55, 71–72 (DT), Lys88, 147–150 (FGWD), Lys170, and 175–176 (HR).

The protein belongs to the HAM1 NTPase family. As to quaternary structure, homodimer. Requires Mg(2+) as cofactor. Mn(2+) is required as a cofactor.

The protein resides in the cytoplasm. It catalyses the reaction ITP + H2O = IMP + diphosphate + H(+). The catalysed reaction is dITP + H2O = dIMP + diphosphate + H(+). The enzyme catalyses XTP + H2O = XMP + diphosphate + H(+). It carries out the reaction N(6)-hydroxy-dATP + H2O = N(6)-hydroxy-dAMP + diphosphate + H(+). Functionally, pyrophosphatase that hydrolyzes the non-canonical purine nucleotides inosine triphosphate (ITP), deoxyinosine triphosphate (dITP) as well as 2'-deoxy-N-6-hydroxylaminopurine triphosphate (dHAPTP) and xanthosine 5'-triphosphate (XTP) to their respective monophosphate derivatives. The enzyme does not distinguish between the deoxy- and ribose forms. Probably excludes non-canonical purines from RNA and DNA precursor pools, thus preventing their incorporation into RNA and DNA and avoiding chromosomal lesions. In Danio rerio (Zebrafish), this protein is Inosine triphosphate pyrophosphatase (itpa).